The sequence spans 65 residues: DNA gyrase inhibitor YacG (65 aa).

Zn(2+) is bound by residues C9, C12, C28, and C32. The tract at residues 43–65 (EEKRIPSQSENSDSDDWSGQPEQ) is disordered.

The protein belongs to the DNA gyrase inhibitor YacG family. In terms of assembly, interacts with GyrB. Zn(2+) is required as a cofactor.

Its function is as follows. Inhibits all the catalytic activities of DNA gyrase by preventing its interaction with DNA. Acts by binding directly to the C-terminal domain of GyrB, which probably disrupts DNA binding by the gyrase. The chain is DNA gyrase inhibitor YacG from Photorhabdus laumondii subsp. laumondii (strain DSM 15139 / CIP 105565 / TT01) (Photorhabdus luminescens subsp. laumondii).